The chain runs to 148 residues: Nucleoside diphosphate kinase (148 aa).

ATP is bound by residues Lys9, Phe57, Arg85, Thr91, Arg102, and Asn112. His115 serves as the catalytic Pros-phosphohistidine intermediate.

It belongs to the NDK family. Requires Mg(2+) as cofactor.

The catalysed reaction is a 2'-deoxyribonucleoside 5'-diphosphate + ATP = a 2'-deoxyribonucleoside 5'-triphosphate + ADP. It catalyses the reaction a ribonucleoside 5'-diphosphate + ATP = a ribonucleoside 5'-triphosphate + ADP. In terms of biological role, major role in the synthesis of nucleoside triphosphates other than ATP. The ATP gamma phosphate is transferred to the NDP beta phosphate via a ping-pong mechanism, using a phosphorylated active-site intermediate. This is Nucleoside diphosphate kinase from Helianthus annuus (Common sunflower).